A 205-amino-acid polypeptide reads, in one-letter code: uncharacterized protein (205 aa).

The region spanning 26–129 (DWHHVSRVAD…VQDADRLDAI (104 aa)) is the HD domain.

This is an uncharacterized protein from Bacillus subtilis (strain 168).